The following is a 402-amino-acid chain: Multidrug resistance protein MdtH (402 aa).

Topologically, residues methionine 1–lysine 12 are cytoplasmic. The helical transmembrane segment at tyrosine 13–isoleucine 33 threads the bilayer. Residues serine 34–glutamate 98 lie on the Periplasmic side of the membrane. Residues proline 99 to phenylalanine 116 form a helical membrane-spanning segment. Residues aspartate 117–serine 138 lie on the Cytoplasmic side of the membrane. Residues leucine 139–leucine 159 traverse the membrane as a helical segment. Residues glutamine 160–arginine 164 are Periplasmic-facing. The helical transmembrane segment at leucine 165–leucine 185 threads the bilayer. Topologically, residues proline 186 to tyrosine 213 are cytoplasmic. Residues valine 214 to methionine 234 form a helical membrane-spanning segment. Residues valine 235–alanine 243 are Periplasmic-facing. Residues alanine 244–alanine 264 traverse the membrane as a helical segment. Residues arginine 265–arginine 276 lie on the Cytoplasmic side of the membrane. The helical transmembrane segment at leucine 277–leucine 297 threads the bilayer. Residues glutamine 298–glutamine 299 are Periplasmic-facing. A helical membrane pass occupies residues leucine 300 to threonine 320. Over leucine 321–arginine 339 the chain is Cytoplasmic. The helical transmembrane segment at leucine 340–glycine 360 threads the bilayer. Residues lysine 361–glutamate 367 are Periplasmic-facing. Residues leucine 368–phenylalanine 388 form a helical membrane-spanning segment. At serine 389–alanine 402 the chain is on the cytoplasmic side.

This sequence belongs to the major facilitator superfamily. DHA1 family. MdtH (TC 2.A.1.2.21) subfamily.

The protein resides in the cell inner membrane. This is Multidrug resistance protein MdtH from Salmonella typhi.